The sequence spans 261 residues: Mediator of RNA polymerase II transcription subunit 7 (261 aa).

2 disordered regions span residues 1-55 and 224-250; these read MAEA…TPAE and DSASKSGENDTAKRTTGDQDANNANSS. Composition is skewed to basic and acidic residues over residues 23–45 and 230–240; these read FTPDNLKRLEEVKKEASKGEDGK and GENDTAKRTTG. Residues 241–250 show a composition bias toward polar residues; it reads DQDANNANSS.

This sequence belongs to the Mediator complex subunit 7 family. Component of the Mediator complex.

The protein localises to the nucleus. Functionally, component of the Mediator complex, a coactivator involved in the regulated transcription of nearly all RNA polymerase II-dependent genes. Mediator functions as a bridge to convey information from gene-specific regulatory proteins to the basal RNA polymerase II transcription machinery. Mediator is recruited to promoters by direct interactions with regulatory proteins and serves as a scaffold for the assembly of a functional preinitiation complex with RNA polymerase II and the general transcription factors. This Neosartorya fischeri (strain ATCC 1020 / DSM 3700 / CBS 544.65 / FGSC A1164 / JCM 1740 / NRRL 181 / WB 181) (Aspergillus fischerianus) protein is Mediator of RNA polymerase II transcription subunit 7 (med7).